Here is a 913-residue protein sequence, read N- to C-terminus: SUN domain-containing protein 1 (913 aa).

The interval 1-139 (MDFSRLHTYT…VLRHPVLDES (139 aa)) is LMNA-binding. The Nuclear portion of the chain corresponds to 1–415 (MDFSRLHTYT…LTRCLRNICK (415 aa)). 2 positions are modified to phosphoserine: Ser-48 and Ser-66. Residues 69-81 (SQAIDSHISTSRA) are compositionally biased toward polar residues. A disordered region spans residues 69–120 (SQAIDSHISTSRATPAKGRETRTVKQRRSASKPAFSINHLSGKGLSSSTSHD). Residues 108–120 (LSGKGLSSSTSHD) show a composition bias toward low complexity. A Phosphoserine modification is found at Ser-139. The tract at residues 209–302 (SRVYSRDRTL…MTAGELSRVD (94 aa)) is SYNE2-binding. The interval 223 to 302 (VSFYLDRTLW…MTAGELSRVD (80 aa)) is EMD-binding. The helical transmembrane segment at 416–436 (VFVLLLPLLLLLGAGVSLWGQ) threads the bilayer. Residues 437–913 (GNFFSLLPVL…RFRVHGEPIQ (477 aa)) lie on the Perinuclear space side of the membrane. Residues 456-485 (RVDDSKGMHRPGPLPPSPPPKVDHKASQWP) are disordered. Coiled-coil stretches lie at residues 491-533 (GQKV…EGLS) and 563-638 (HHDH…CEQA). A sufficient for interaction with SYNE1 and SYNE2 region spans residues 703 to 913 (TSEAIVSAVN…RFRVHGEPIQ (211 aa)). In terms of domain architecture, SUN spans 751 to 912 (GGSILSTRCS…YRFRVHGEPI (162 aa)).

As to quaternary structure, core component of the LINC complex which is composed of inner nuclear membrane SUN domain-containing proteins coupled to outer nuclear membrane KASH domain-containing nesprins. SUN and KASH domain-containing proteins seem to bind each other promiscuously; however, differentially expression of LINC complex constituents is giving rise to specific assemblies. At least SUN1/2-containing core LINC complexes are proposed to be hexameric composed of three protomers of each KASH and SUN domain-containing protein. Interacts with KASH5 (via the last 22 amino acids); this interaction mediates KASH5 telomere localization by forming a SUN1:KASH5 LINC complex. Isoform 5 is proposed to form a non-nuclear spermatogenesis-specific LINC complex with SYNE3 during sperm head formation. Interacts with SYNE2 and SYNE1; probably forming respective LINC complexes. Interacts with A-type lamin with a strong preference for unprocessed A-type lamin compared with the mature protein. Interaction with lamins B1 and C is hardly detectable. Interacts with NAT10. Interacts with EMD and TSNAX. Associates with the nuclear pore complex (NPC). Interacts with CCDC79/TERB1; promoting the accumulation of the LINC complex complexes at the telomere-nuclear envelope attachment sites. Interacts with IRAG2. Interacts (via KASH domain) with TMEM258. Post-translationally, the disulfide bond with KASH domain-containing nesprins is required for stability of the respective LINC complexes under tensile forces. As to expression, widely expressed. Expressed in cochlear outer hair cells (at protein level). Seven isoforms are expressed in testis including testis-specific isoform 5. Isoform 5 is the only isoform expressed at the end of sperm differentiation. Six isoforms are expressed in muscle, heart and brain, four isoforms in kidney and three isoforms in liver.

Its subcellular location is the nucleus inner membrane. It localises to the cytoplasmic vesicle. The protein localises to the secretory vesicle. The protein resides in the acrosome outer membrane. Functionally, as a component of the LINC (LInker of Nucleoskeleton and Cytoskeleton) complex involved in the connection between the nuclear lamina and the cytoskeleton. The nucleocytoplasmic interactions established by the LINC complex play an important role in the transmission of mechanical forces across the nuclear envelope and in nuclear movement and positioning. Required for interkinetic nuclear migration (INM) and essential for nucleokinesis and centrosome-nucleus coupling during radial neuronal migration in the cerebral cortex and during glial migration. Involved in telomere attachment to nuclear envelope in the prophase of meiosis implicating a SUN1/2:KASH5 LINC complex in which SUN1 and SUN2 seem to act at least partial redundantly. Required for gametogenesis and involved in selective gene expression of coding and non-coding RNAs needed for gametogenesis. Helps to define the distribution of nuclear pore complexes (NPCs). Required for efficient localization of SYNE4 in the nuclear envelope. May be involved in nuclear remodeling during sperm head formation in spermatogenesis. May play a role in DNA repair by suppressing non-homologous end joining repair to facilitate the repair of DNA cross-links. Isoform 5 may be involved in nuclear remodeling during sperm head formation in spermatogenesis. A probable SUN1 isoform 5:SYNE3 LINC complex may tether spermatid nuclei to anterior cytoskeletal structures such as actin filaments present at membraneous junctions of spermatids and Sertoli cells. The sequence is that of SUN domain-containing protein 1 from Mus musculus (Mouse).